A 428-amino-acid chain; its full sequence is Divergent protein kinase domain 1A (428 aa).

At 1 to 27 the chain is on the cytoplasmic side; the sequence is MARSLCPGAWLRKPYYLQARFSYVRMK. Residues 28–48 traverse the membrane as a helical segment; the sequence is YLFFSWLVVFVGSWIIYVQYS. At 49-428 the chain is on the lumenal side; it reads TYTELCRGKD…WKKISYTNDS (380 aa).

Belongs to the DIPK family. Among the many cysteines in the lumenal domain, most are probably involved in disulfide bonds.

Its subcellular location is the endoplasmic reticulum membrane. In Homo sapiens (Human), this protein is Divergent protein kinase domain 1A.